Reading from the N-terminus, the 205-residue chain is Homeobox protein goosecoid-2 (205 aa).

2 disordered regions span residues 33–58 and 185–205; these read SLPARAACPPQPAGRQSPAKPEEPGA and KRASASARLLPGVKKSPKGSC. A DNA-binding region (homeobox) is located at residues 126–185; it reads TRRHRTIFSEEQLQALEALFVQNQYPDVSTRERLAGRIRLREERVEVWFKNRRAKWRHQK.

It belongs to the paired homeobox family. Bicoid subfamily. As to expression, detected in adult testis and pituitary, and in 9-10 week fetal tissue (thorax). Probably expressed in other tissues at low levels.

It is found in the nucleus. In terms of biological role, may have a role in development. May regulate its own transcription. May bind the bicoid consensus sequence TAATCC. In Homo sapiens (Human), this protein is Homeobox protein goosecoid-2 (GSC2).